A 116-amino-acid chain; its full sequence is Large ribosomal subunit protein bL17 (116 aa).

This sequence belongs to the bacterial ribosomal protein bL17 family. In terms of assembly, part of the 50S ribosomal subunit. Contacts protein L32.

The chain is Large ribosomal subunit protein bL17 from Synechococcus sp. (strain JA-2-3B'a(2-13)) (Cyanobacteria bacterium Yellowstone B-Prime).